The following is a 363-amino-acid chain: UDP-N-acetylglucosamine--N-acetylmuramyl-(pentapeptide) pyrophosphoryl-undecaprenol N-acetylglucosamine transferase (363 aa).

Residues 15 to 17, Asn127, Arg169, Ser197, Ile251, 270 to 275, and Gln296 contribute to the UDP-N-acetyl-alpha-D-glucosamine site; these read TGG and ALTVSE.

It belongs to the glycosyltransferase 28 family. MurG subfamily.

It is found in the cell inner membrane. The enzyme catalyses di-trans,octa-cis-undecaprenyl diphospho-N-acetyl-alpha-D-muramoyl-L-alanyl-D-glutamyl-meso-2,6-diaminopimeloyl-D-alanyl-D-alanine + UDP-N-acetyl-alpha-D-glucosamine = di-trans,octa-cis-undecaprenyl diphospho-[N-acetyl-alpha-D-glucosaminyl-(1-&gt;4)]-N-acetyl-alpha-D-muramoyl-L-alanyl-D-glutamyl-meso-2,6-diaminopimeloyl-D-alanyl-D-alanine + UDP + H(+). The protein operates within cell wall biogenesis; peptidoglycan biosynthesis. Cell wall formation. Catalyzes the transfer of a GlcNAc subunit on undecaprenyl-pyrophosphoryl-MurNAc-pentapeptide (lipid intermediate I) to form undecaprenyl-pyrophosphoryl-MurNAc-(pentapeptide)GlcNAc (lipid intermediate II). This chain is UDP-N-acetylglucosamine--N-acetylmuramyl-(pentapeptide) pyrophosphoryl-undecaprenol N-acetylglucosamine transferase, found in Dichelobacter nodosus (strain VCS1703A).